The following is a 318-amino-acid chain: Mediator of RNA polymerase II transcription subunit 30 (318 aa).

Low complexity predominate over residues 1–13; that stretch reads MWKYGQNQGNQGP. Disordered regions lie at residues 1–92 and 120–142; these read MWKY…QQQQ and GGGV…QNIP. Over residues 14–33 the composition is skewed to gly residues; that stretch reads SSGGGGGGGPNMMPMGGFGM. Composition is skewed to low complexity over residues 34-55, 78-92, and 124-142; these read QHGN…QQMG, PGMS…QQQQ, and VPQQ…QNIP.

It belongs to the Mediator complex subunit 30 family. In terms of assembly, component of the Mediator complex, which includes at least CDK8, MED4, MED6, MED11, MED14, MED17, MED18, MED20, MED21, MED22, MED27, MED28, MED30 and MED31.

Its subcellular location is the nucleus. In terms of biological role, component of the Mediator complex, a coactivator involved in the regulated transcription of nearly all RNA polymerase II-dependent genes. Mediator functions as a bridge to convey information from gene-specific regulatory proteins to the basal RNA polymerase II transcription machinery. Mediator is recruited to promoters by direct interactions with regulatory proteins and serves as a scaffold for the assembly of a functional preinitiation complex with RNA polymerase II and the general transcription factors. The protein is Mediator of RNA polymerase II transcription subunit 30 (MED30) of Drosophila melanogaster (Fruit fly).